The following is a 199-amino-acid chain: MIGWLHGQIIDKHQPGKLVLDVNGVGYDVETSLNTFFQIENGNQPIGLHIHTIVREDALLLYGFLDKEERSLFRSLIKVNGVGPKLAMTVLSSISPKEFIQCIHQENAALLTKLPGIGKKTAERLVVEMRDSIKQFDGSVSDTFQKQAGSTHSQQEAISALEALGYKPQEAWKVVNKIDNGNKSCEQLIREALQILSSR.

The tract at residues 1–65 (MIGWLHGQII…EDALLLYGFL (65 aa)) is domain I. The domain II stretch occupies residues 66-144 (DKEERSLFRS…QFDGSVSDTF (79 aa)). The segment at 144–148 (FQKQA) is flexible linker. The tract at residues 149-199 (GSTHSQQEAISALEALGYKPQEAWKVVNKIDNGNKSCEQLIREALQILSSR) is domain III.

It belongs to the RuvA family. As to quaternary structure, homotetramer. Forms an RuvA(8)-RuvB(12)-Holliday junction (HJ) complex. HJ DNA is sandwiched between 2 RuvA tetramers; dsDNA enters through RuvA and exits via RuvB. An RuvB hexamer assembles on each DNA strand where it exits the tetramer. Each RuvB hexamer is contacted by two RuvA subunits (via domain III) on 2 adjacent RuvB subunits; this complex drives branch migration. In the full resolvosome a probable DNA-RuvA(4)-RuvB(12)-RuvC(2) complex forms which resolves the HJ.

The protein resides in the cytoplasm. The RuvA-RuvB-RuvC complex processes Holliday junction (HJ) DNA during genetic recombination and DNA repair, while the RuvA-RuvB complex plays an important role in the rescue of blocked DNA replication forks via replication fork reversal (RFR). RuvA specifically binds to HJ cruciform DNA, conferring on it an open structure. The RuvB hexamer acts as an ATP-dependent pump, pulling dsDNA into and through the RuvAB complex. HJ branch migration allows RuvC to scan DNA until it finds its consensus sequence, where it cleaves and resolves the cruciform DNA. This chain is Holliday junction branch migration complex subunit RuvA, found in Legionella pneumophila (strain Paris).